Reading from the N-terminus, the 272-residue chain is GATA zinc finger domain-containing protein 1 (272 aa).

The GATA-type zinc-finger motif lies at 9 to 33; that stretch reads CSVCKTTSSSMWKKGPQGEILCHHC. A disordered region spans residues 67–120; sequence TFASTSAAPPQSNGGGGGKQSKQEIHRRSARLRNTKYKSAPAAEKKVSTKGKGR. Lysine 167 is modified (N6-acetyllysine). A Glycyl lysine isopeptide (Lys-Gly) (interchain with G-Cter in SUMO2) cross-link involves residue lysine 265.

It localises to the nucleus. The protein is GATA zinc finger domain-containing protein 1 (GATAD1) of Bos taurus (Bovine).